We begin with the raw amino-acid sequence, 94 residues long: Large ribosomal subunit protein bL25 (94 aa).

It belongs to the bacterial ribosomal protein bL25 family. As to quaternary structure, part of the 50S ribosomal subunit; part of the 5S rRNA/L5/L18/L25 subcomplex. Contacts the 5S rRNA. Binds to the 5S rRNA independently of L5 and L18.

Functionally, this is one of the proteins that binds to the 5S RNA in the ribosome where it forms part of the central protuberance. This is Large ribosomal subunit protein bL25 from Shigella boydii serotype 4 (strain Sb227).